Consider the following 473-residue polypeptide: L-seryl-tRNA(Sec) selenium transferase (473 aa).

Lys-302 is modified (N6-(pyridoxal phosphate)lysine).

It belongs to the SelA family. Pyridoxal 5'-phosphate serves as cofactor.

The protein resides in the cytoplasm. The catalysed reaction is L-seryl-tRNA(Sec) + selenophosphate + H(+) = L-selenocysteinyl-tRNA(Sec) + phosphate. It functions in the pathway aminoacyl-tRNA biosynthesis; selenocysteinyl-tRNA(Sec) biosynthesis; selenocysteinyl-tRNA(Sec) from L-seryl-tRNA(Sec) (bacterial route): step 1/1. Functionally, converts seryl-tRNA(Sec) to selenocysteinyl-tRNA(Sec) required for selenoprotein biosynthesis. The chain is L-seryl-tRNA(Sec) selenium transferase from Shewanella oneidensis (strain ATCC 700550 / JCM 31522 / CIP 106686 / LMG 19005 / NCIMB 14063 / MR-1).